A 494-amino-acid polypeptide reads, in one-letter code: Ankyrin repeat domain-containing protein 33B (494 aa).

The segment at 1–80 (MVLLAGTGPE…SAESVPEGVP (80 aa)) is disordered. The span at 30–42 (VEEDPADYEEFED) shows a compositional bias: acidic residues. ANK repeat units follow at residues 84–113 (PETA…SVEE), 120–150 (NGRT…DVNW), 154–183 (EGNT…GLDL), 189–218 (FGFT…DVHA), and 223–255 (RGMS…PEQF). The interval 349–494 (RAARGPQAQE…RRTAPWKKRT (146 aa)) is disordered. Residues 371–382 (TGQEDADSREGS) show a composition bias toward basic and acidic residues. At S405 the chain carries Phosphoserine. Basic and acidic residues-rich tracts occupy residues 440–451 (RPARKGSTKDSG) and 459–487 (RYKE…ERRT). Positions 459-488 (RYKEAKEEKRKAEEAEKKRQAEAQKERRTA) form a coiled coil.

The protein is Ankyrin repeat domain-containing protein 33B (ANKRD33B) of Homo sapiens (Human).